The following is a 236-amino-acid chain: uncharacterized protein (236 aa).

The Response regulatory domain maps to threonine 3–arginine 116. Aspartate 54 is modified (4-aspartylphosphate). Residues leucine 135–phenylalanine 235 enclose the HTH LytTR-type domain.

This is an uncharacterized protein from Shewanella oneidensis (strain ATCC 700550 / JCM 31522 / CIP 106686 / LMG 19005 / NCIMB 14063 / MR-1).